Consider the following 146-residue polypeptide: Anti-sigma F factor (146 aa).

Belongs to the anti-sigma-factor family.

The catalysed reaction is L-seryl-[protein] + ATP = O-phospho-L-seryl-[protein] + ADP + H(+). It catalyses the reaction L-threonyl-[protein] + ATP = O-phospho-L-threonyl-[protein] + ADP + H(+). Its function is as follows. Binds to sigma F and blocks its ability to form an RNA polymerase holoenzyme (E-sigma F). Phosphorylates SpoIIAA on a serine residue. This phosphorylation may enable SpoIIAA to act as an anti-anti-sigma factor that counteracts SpoIIAB and thus releases sigma F from inhibition. In Geobacillus sp. (strain WCH70), this protein is Anti-sigma F factor.